The chain runs to 930 residues: MSDHHPLKEMSDSNSSPLLPEPLSSRYKLYESELSSPTWPSSSQDTHPALPLLEMPEEKDLRSSDEDSHIVKIEKPNERNKRRESEVSRRASAGRGGFSLFQAVSYLTGDMKECKNWLKDKPLVLQFLDWVLRGAAQVMFVNNPISGLIIFIGLLIQNPWWTIAGTLGTVASTLAALALSQDRSAIASGLHGYNGMLVGLLMAVFSEKLDYYWWLLFPVTFTSMACPIISSALSTIFAKWDLPVFTLPFNIALTLYLAATGHYNLFFPTTLIKPASAAPNITWTEIEMPLLLQTIPVGVGQVYGCDNPWTGGVILVALFISSPLICLHAAIGSIVGLLAALTVATPFETIYLGLWSYNCVLSCIAIGGMFYALTWQTHLLALVCALFCAYMGAALSNTMAVVGVPSGTWAFCLSTLTFLLLTSNNTGIYKLPLSKVTYPEANRIYFLTVRRSEEEKSPNGGSGEQSHGSGQWKAEESSETVLPRRRSVFHIEWSSIRRRSKVFGKGEHQERQTKEPLPCPYRKPTVELFDLDTMEESTEIKVEANTARTSWIQSSMVAGGKRVSKALSYITGEMKECGEGLKDKSPVFQFLDWVLRGMSQVMFVNNPLSGILIVLGLFVQNPWWAISGCLGTVMSTLTALILSQDKSAIAAGLHGYNGVLVGLLMAVFSDKGNYYWWLLLPVIVMSMTCPILSSALSTVFSKWDLPVFTLPFNIAVTLYLAATGHHNLFFPTTLLQPATTTPNITWSDIQVSLLLRAIPVGIGQVYGCDNPWTGGIFLVALFISSPLICLHAAIGSTIGMLAALSIATPFDSIYFGLCGFNSTLACIAIGGMFYVITWQTHLLAIACALFAAYLGAALANMLSVFGLPPCTWPFCLSALTFLLLTSNNPAIYKLPLSKVTYPEANRIYFLSQEKNRRASTITKYQAYDVS.

Residues 1 to 11 (MSDHHPLKEMS) show a composition bias toward basic and acidic residues. A disordered region spans residues 1–90 (MSDHHPLKEM…KRRESEVSRR (90 aa)). 2 stretches are compositionally biased toward low complexity: residues 12 to 25 (DSNSSPLLPEPLSS) and 32 to 43 (SELSSPTWPSSS). Basic and acidic residues predominate over residues 56 to 89 (PEEKDLRSSDEDSHIVKIEKPNERNKRRESEVSR). The next 8 membrane-spanning stretches (helical) occupy residues 145–165 (ISGLIIFIGLLIQNPWWTIAG), 185–205 (AIASGLHGYNGMLVGLLMAVF), 213–233 (WWLLFPVTFTSMACPIISSAL), 242–262 (LPVFTLPFNIALTLYLAATGH), 280–300 (NITWTEIEMPLLLQTIPVGVG), 311–331 (GGVILVALFISSPLICLHAAI), 350–372 (IYLGLWSYNCVLSCIAIGGMFYA), and 401–421 (VVGVPSGTWAFCLSTLTFLLL). The tract at residues 452 to 479 (SEEEKSPNGGSGEQSHGSGQWKAEESSE) is disordered. A Phosphoserine modification is found at serine 487. Helical transmembrane passes span 610–630 (GILIVLGLFVQNPWWAISGCL), 648–668 (AIAAGLHGYNGVLVGLLMAVF), 676–696 (WWLLLPVIVMSMTCPILSSAL), and 705–725 (LPVFTLPFNIAVTLYLAATGH). Asparagine 743 is a glycosylation site (N-linked (GlcNAc...) asparagine). 4 consecutive transmembrane segments (helical) span residues 774–794 (GGIFLVALFISSPLICLHAAI), 813–833 (IYFGLCGFNSTLACIAIGGMF), 842–862 (LLAIACALFAAYLGAALANML), and 864–884 (VFGLPPCTWPFCLSALTFLLL).

This sequence belongs to the urea transporter family. In terms of tissue distribution, highly expressed in kidney medulla (at protein level). Also detected in testes, heart, brain and liver (at protein level). In the kidney, present in thin descending limbs of the loop of Henle and in the middle and terminal inner medullary collecting ducts. As to expression, expressed in the kidney medulla. Expressed in the peritubular myoid cells forming the outermost layer of the seminiferous tubules within the testes and is not detected in kidney. Expression levels are coordinated with the stage of testes development and increase 15 days postpartum, commensurate with the start of seminiferous tubule fluid movement.

It is found in the apical cell membrane. The protein resides in the basolateral cell membrane. The enzyme catalyses urea(in) = urea(out). Inhibited by phloretin. Activated by forskolin, 3-isobutyl-1-methylxanthine (IBMX) and cAMP. With respect to regulation, inhibited by phloretin. Its activity is regulated as follows. Inhibited by phloretin. Activated by forskolin, 3-isobutyl-1-methylxanthine (IBMX) and cAMP. Mediates the transport of urea driven by a concentration gradient across the cell membrane of the renal inner medullary collecting duct which is critical to the urinary concentrating mechanism. Its function is as follows. Mediates the transport of urea driven by a concentration gradient across the cell membrane. Implicated in the urea movement across the blood-testis barrier and does not translocate water. This Mus musculus (Mouse) protein is Urea transporter 2 (Slc14a2).